We begin with the raw amino-acid sequence, 89 residues long: Small ribosomal subunit protein uS15 (89 aa).

The protein belongs to the universal ribosomal protein uS15 family. In terms of assembly, part of the 30S ribosomal subunit. Forms a bridge to the 50S subunit in the 70S ribosome, contacting the 23S rRNA.

Functionally, one of the primary rRNA binding proteins, it binds directly to 16S rRNA where it helps nucleate assembly of the platform of the 30S subunit by binding and bridging several RNA helices of the 16S rRNA. Its function is as follows. Forms an intersubunit bridge (bridge B4) with the 23S rRNA of the 50S subunit in the ribosome. In Chloroflexus aurantiacus (strain ATCC 29366 / DSM 635 / J-10-fl), this protein is Small ribosomal subunit protein uS15.